A 1486-amino-acid polypeptide reads, in one-letter code: Chromosome partition protein MukB (1486 aa).

Residue 34–41 participates in ATP binding; that stretch reads GGNGAGKS. 3 coiled-coil regions span residues 326 to 418, 444 to 480, and 509 to 603; these read LEAD…QYNQ, LETF…QAYQ, and RHLA…RAPV. The flexible hinge stretch occupies residues 666–783; the sequence is PGGSEDQRLN…EVPLFGRAAR (118 aa). 3 coiled-coil regions span residues 835–923, 977–1115, and 1209–1266; these read EAEI…AKLE, EMLS…TAKA, and VEAI…QNVS.

This sequence belongs to the SMC family. MukB subfamily. As to quaternary structure, homodimerization via its hinge domain. Binds to DNA via its C-terminal region. Interacts, and probably forms a ternary complex, with MukE and MukF via its C-terminal region. The complex formation is stimulated by calcium or magnesium. Interacts with tubulin-related protein FtsZ.

The protein resides in the cytoplasm. It localises to the nucleoid. Functionally, plays a central role in chromosome condensation, segregation and cell cycle progression. Functions as a homodimer, which is essential for chromosome partition. Involved in negative DNA supercoiling in vivo, and by this means organize and compact chromosomes. May achieve or facilitate chromosome segregation by condensation DNA from both sides of a centrally located replisome during cell division. This chain is Chromosome partition protein MukB, found in Escherichia coli (strain K12 / MC4100 / BW2952).